Here is a 305-residue protein sequence, read N- to C-terminus: Lipoyl synthase (305 aa).

7 residues coordinate [4Fe-4S] cluster: C41, C46, C52, C68, C72, C75, and S281. Residues 54–270 (GARRTATFMI…RKVAMDKGFK (217 aa)) enclose the Radical SAM core domain. Residues 283–298 (HADEQVNEAAKEKQRQ) are compositionally biased toward basic and acidic residues. A disordered region spans residues 283–305 (HADEQVNEAAKEKQRQGEAQLNS).

Belongs to the radical SAM superfamily. Lipoyl synthase family. Requires [4Fe-4S] cluster as cofactor.

The protein resides in the cytoplasm. The enzyme catalyses [[Fe-S] cluster scaffold protein carrying a second [4Fe-4S](2+) cluster] + N(6)-octanoyl-L-lysyl-[protein] + 2 oxidized [2Fe-2S]-[ferredoxin] + 2 S-adenosyl-L-methionine + 4 H(+) = [[Fe-S] cluster scaffold protein] + N(6)-[(R)-dihydrolipoyl]-L-lysyl-[protein] + 4 Fe(3+) + 2 hydrogen sulfide + 2 5'-deoxyadenosine + 2 L-methionine + 2 reduced [2Fe-2S]-[ferredoxin]. Its pathway is protein modification; protein lipoylation via endogenous pathway; protein N(6)-(lipoyl)lysine from octanoyl-[acyl-carrier-protein]. In terms of biological role, catalyzes the radical-mediated insertion of two sulfur atoms into the C-6 and C-8 positions of the octanoyl moiety bound to the lipoyl domains of lipoate-dependent enzymes, thereby converting the octanoylated domains into lipoylated derivatives. The protein is Lipoyl synthase of Staphylococcus aureus (strain Mu3 / ATCC 700698).